The sequence spans 345 residues: Glycerol-3-phosphate dehydrogenase [NAD(P)+] (345 aa).

Positions 23, 24, 44, and 118 each coordinate NADPH. Residues Lys118, Gly147, and Thr149 each contribute to the sn-glycerol 3-phosphate site. Residue Ala151 coordinates NADPH. Sn-glycerol 3-phosphate is bound by residues Lys203, Asp256, Ser266, Arg267, and Asn268. The Proton acceptor role is filled by Lys203. Arg267 is a binding site for NADPH. Val291 and Glu293 together coordinate NADPH.

Belongs to the NAD-dependent glycerol-3-phosphate dehydrogenase family.

It localises to the cytoplasm. It catalyses the reaction sn-glycerol 3-phosphate + NAD(+) = dihydroxyacetone phosphate + NADH + H(+). The catalysed reaction is sn-glycerol 3-phosphate + NADP(+) = dihydroxyacetone phosphate + NADPH + H(+). It functions in the pathway membrane lipid metabolism; glycerophospholipid metabolism. Catalyzes the reduction of the glycolytic intermediate dihydroxyacetone phosphate (DHAP) to sn-glycerol 3-phosphate (G3P), the key precursor for phospholipid synthesis. The polypeptide is Glycerol-3-phosphate dehydrogenase [NAD(P)+] (Vibrio parahaemolyticus serotype O3:K6 (strain RIMD 2210633)).